The following is a 693-amino-acid chain: Polyribonucleotide nucleotidyltransferase (693 aa).

Residues D489 and D495 each coordinate Mg(2+). The 60-residue stretch at 556-615 (PQIHVMNINPAKIKDVVGRGGATVKGIVEKTGAQIDTSDSGEVKVFAKDKKSMDMAVAMI) folds into the KH domain. The S1 motif domain maps to 625–693 (GQVYKGKIVK…GRVKLSLVAR (69 aa)).

The protein belongs to the polyribonucleotide nucleotidyltransferase family. In terms of assembly, component of the RNA degradosome, which is a multiprotein complex involved in RNA processing and mRNA degradation. The cofactor is Mg(2+).

Its subcellular location is the cytoplasm. The enzyme catalyses RNA(n+1) + phosphate = RNA(n) + a ribonucleoside 5'-diphosphate. In terms of biological role, involved in mRNA degradation. Catalyzes the phosphorolysis of single-stranded polyribonucleotides processively in the 3'- to 5'-direction. The chain is Polyribonucleotide nucleotidyltransferase from Francisella tularensis subsp. novicida (strain U112).